The following is a 290-amino-acid chain: HTH-type transcriptional activator RhaR (290 aa).

The 99-residue stretch at 179 to 277 (DLIMSALQQS…GMTPRDYRQR (99 aa)) folds into the HTH araC/xylS-type domain. 2 DNA-binding regions (H-T-H motif) span residues 196 to 217 (ANFC…RQQT) and 244 to 267 (ISDI…TREA).

As to quaternary structure, binds DNA as a dimer.

It localises to the cytoplasm. In terms of biological role, activates expression of the rhaSR operon in response to L-rhamnose. This chain is HTH-type transcriptional activator RhaR, found in Yersinia pseudotuberculosis serotype O:3 (strain YPIII).